Here is a 422-residue protein sequence, read N- to C-terminus: Protein TEX1 (422 aa).

5 WD repeats span residues 61–100 (ITPN…FDKS), 158–197 (GSKT…SSVC), 207–246 (EDND…LEVC), 251–290 (AHTG…CELI), and 293–332 (DLNS…LLHS). A disordered region spans residues 388–422 (KRRKNNGGGNNHNKRTSKNTDRIGKDRPSRFNSKK). The segment covering 405-416 (KNTDRIGKDRPS) has biased composition (basic and acidic residues).

Belongs to the THOC3 family. As to quaternary structure, component of the transcription/export (TREX) complex and the THO complex.

It is found in the nucleus. Functionally, component of the TREX complex, which operates in coupling transcription elongation to mRNA export. This Saccharomyces cerevisiae (strain ATCC 204508 / S288c) (Baker's yeast) protein is Protein TEX1 (TEX1).